The chain runs to 962 residues: Splicing regulator ARVCF (962 aa).

The stretch at 11-46 (SILASVKEQEARFERLTRALEQERRHVALQLERAQQ) forms a coiled coil. The interval 95–123 (VTVEEDPGTPTSHVSIVTSEDGTTRRTET) is disordered. Phosphothreonine is present on residues T103 and T105. Residues 103–115 (TPTSHVSIVTSED) are compositionally biased toward polar residues. At R171 the chain carries Omega-N-methylarginine. Disordered regions lie at residues 233–255 (GRREAFPMGSESGPPSGRSLPEH), 268–291 (RSLAADDEGGPDLEPDYSTATRRR), and 322–357 (AATAPLAQPERGSLGSLDRVVRRSPSVDSTRKEPRW). A Phosphoserine modification is found at S269. Positions 272–282 (ADDEGGPDLEP) are enriched in acidic residues. Phosphoserine occurs at positions 334, 337, 345, and 347. ARM repeat units follow at residues 350–389 (STRKEPRWRDPELPEVLAMLRHPVDPVKANAAAYLQHLCF), 392–431 (EGIKRRVRQLRGLPLLVALLDHPRAEVRRRACGALRNLSY), 435–469 (TDNKAAIRDCGGVPALVRLLRAARDNEVRELVTGT), 470–510 (LWNL…NEDS), 528–567 (LRNVSSDGAEARRRLRECEGLVDALLHALQSAVGRKDTDN), and 577–623 (MRNL…GKKA). The tract at residues 593–618 (RYQEAEPGIPGSTTSQRRRKDDASCF) is disordered. Position 607 is a phosphoserine (S607). Positions 608–624 (QRRRKDDASCFGGKKAK) match the Nuclear localization signal motif. T643 is modified (phosphothreonine). ARM repeat units follow at residues 647–687 (PKRT…AAGA), 700–739 (TYIRATVRKERGLPVLVELLQSETDKVVRAVAIALRNLSL), 740–782 (DQRN…AVLN), and 783–827 (TIHE…SHVL). The tract at residues 777 to 962 (VVAVLNTIHE…TKPQPVDSWV (186 aa)) is required for interaction with RNA-binding proteins DDX5, HNRNPH2 and SRSF1 and with mRNAs. Residues 844 to 962 (GWTKSRFQSA…TKPQPVDSWV (119 aa)) are disordered. Phosphoserine is present on residues S864 and S871. T872 carries the phosphothreonine modification. Composition is skewed to basic and acidic residues over residues 878–887 (KSLDGEKSNT) and 920–932 (TSEKELLRPDPGR).

The protein belongs to the beta-catenin family. In terms of assembly, component of a ribonucleoprotein complex containing mRNAs and RNA-binding proteins including DDX5, HNRNPH2 and SRSF1 as well as ARVCF. Interacts (via the extreme C-terminus) with FRMPD2 (via the PDZ 2 domain). Interacts with CCDC85B.

The protein localises to the cell junction. It localises to the adherens junction. Its subcellular location is the nucleus. The protein resides in the cytoplasm. Functionally, contributes to the regulation of alternative splicing of pre-mRNAs. This Mus musculus (Mouse) protein is Splicing regulator ARVCF (Arvcf).